Here is a 456-residue protein sequence, read N- to C-terminus: Protein king tubby (456 aa).

The disordered stretch occupies residues 111–202 (HELEDEESSP…SNGAGGESEG (92 aa)). Residues 120-152 (PVTVIEQQQTAPHSANSTHSQRPSTTRQPSFND) are compositionally biased toward polar residues. At Ser-149 the chain carries Phosphoserine.

This sequence belongs to the TUB family.

The protein localises to the cytoplasm. It is found in the nucleus. The protein resides in the cell projection. Its subcellular location is the cilium membrane. It localises to the rhabdomere. In Drosophila pseudoobscura pseudoobscura (Fruit fly), this protein is Protein king tubby.